The chain runs to 346 residues: DNA-directed RNA polymerase subunit alpha (346 aa).

Positions 1–233 (MLRDEVAVSA…DLFIPFLHAE (233 aa)) are alpha N-terminal domain (alpha-NTD). The tract at residues 268–346 (IELKCIFIDQ…NKFLIGNPSE (79 aa)) is alpha C-terminal domain (alpha-CTD).

It belongs to the RNA polymerase alpha chain family. As to quaternary structure, in plastids the minimal PEP RNA polymerase catalytic core is composed of four subunits: alpha, beta, beta', and beta''. When a (nuclear-encoded) sigma factor is associated with the core the holoenzyme is formed, which can initiate transcription.

It localises to the plastid. The protein localises to the chloroplast. It catalyses the reaction RNA(n) + a ribonucleoside 5'-triphosphate = RNA(n+1) + diphosphate. Functionally, DNA-dependent RNA polymerase catalyzes the transcription of DNA into RNA using the four ribonucleoside triphosphates as substrates. The sequence is that of DNA-directed RNA polymerase subunit alpha from Ranunculus macranthus (Large buttercup).